The primary structure comprises 274 residues: Large ribosomal subunit protein uL2cz/uL2cy (274 aa).

2 disordered regions span residues 1–26 (MAIH…KSNP) and 223–274 (MNPV…RRSK).

The protein belongs to the universal ribosomal protein uL2 family. Part of the 50S ribosomal subunit.

The protein localises to the plastid. It is found in the chloroplast. The chain is Large ribosomal subunit protein uL2cz/uL2cy (rpl2-A) from Daucus carota (Wild carrot).